Consider the following 224-residue polypeptide: Abasic site processing protein YoqW (224 aa).

Residue C2 is the Nucleophile of the active site. Residue C2 is modified to Thiazolidine linkage to a ring-opened DNA abasic site. E106 is an active-site residue.

Belongs to the SOS response-associated peptidase family.

Its activity is regulated as follows. Formation and reversal of DNA-protein cross-link depends on DNA context. Catalyzes formation of the thiazolidine linkage in presence of abasic sites in single-stranded DNA. Mediates the reversal of the thiazolidine cross-link in presence of double stranded DNA. Functionally, sensor of abasic sites in single-stranded DNA (ssDNA) required to preserve genome integrity by promoting error-free repair of abasic sites. Recognizes and binds abasic sites in ssDNA at replication forks and chemically modifies the lesion by forming a covalent cross-link with DNA: forms a stable thiazolidine linkage between a ring-opened abasic site and the alpha-amino and sulfhydryl substituents of its N-terminal catalytic cysteine residue. The DNA-protein cross-link is then reversed: able to catalyze the reversal of the thiazolidine cross-link and cycle between a cross-link and a non-cross-linked state depending on DNA context: mediates self-reversal of the thiazolidine cross-link in double stranded DNA. May act as a protease: mediates autocatalytic processing of its N-terminal methionine in order to expose the catalytic cysteine. The sequence is that of Abasic site processing protein YoqW (yoqW) from Bacillus subtilis (strain 168).